A 118-amino-acid chain; its full sequence is 5-hydroxyisourate hydrolase (118 aa).

3 residues coordinate substrate: His7, Arg46, and Tyr115.

The protein belongs to the transthyretin family. 5-hydroxyisourate hydrolase subfamily. As to quaternary structure, homotetramer.

The enzyme catalyses 5-hydroxyisourate + H2O = 5-hydroxy-2-oxo-4-ureido-2,5-dihydro-1H-imidazole-5-carboxylate + H(+). In terms of biological role, catalyzes the hydrolysis of 5-hydroxyisourate (HIU) to 2-oxo-4-hydroxy-4-carboxy-5-ureidoimidazoline (OHCU). The chain is 5-hydroxyisourate hydrolase from Brucella suis biovar 1 (strain 1330).